Here is a 41-residue protein sequence, read N- to C-terminus: MKIRNSLKALKGRHRENRMVRRKGRIYIINKSNPRYKARQG.

Belongs to the bacterial ribosomal protein bL36 family.

The protein is Large ribosomal subunit protein bL36 of Chelativorans sp. (strain BNC1).